The primary structure comprises 161 residues: Nucleotide-binding protein PFL_4775 (161 aa).

The protein belongs to the YajQ family.

In terms of biological role, nucleotide-binding protein. In Pseudomonas fluorescens (strain ATCC BAA-477 / NRRL B-23932 / Pf-5), this protein is Nucleotide-binding protein PFL_4775.